The chain runs to 254 residues: RNA polymerase sigma factor SigI8 (254 aa).

Residues 61–74 carry the Polymerase core binding motif; it reads DEYSIALIAFNEAI. Residues 209-228 constitute a DNA-binding region (H-T-H motif); that stretch reads YKELTERFNLCRRTLEKNRK.

The protein belongs to the sigma-70 factor family. SigI subfamily. As to quaternary structure, interacts with RsgI8.

Its subcellular location is the cytoplasm. With respect to regulation, negatively regulated by the anti-sigma-I factor RsgI8. Sigma factors are initiation factors that promote the attachment of RNA polymerase to specific initiation sites and are then released. The polypeptide is RNA polymerase sigma factor SigI8 (Acetivibrio thermocellus (strain ATCC 27405 / DSM 1237 / JCM 9322 / NBRC 103400 / NCIMB 10682 / NRRL B-4536 / VPI 7372) (Clostridium thermocellum)).